Reading from the N-terminus, the 329-residue chain is o-succinylbenzoate synthase (329 aa).

Lys-140 acts as the Proton donor in catalysis. Residues Asp-168, Glu-197, and Asp-220 each coordinate Mg(2+). The active-site Proton acceptor is Lys-242.

It belongs to the mandelate racemase/muconate lactonizing enzyme family. MenC type 1 subfamily. It depends on a divalent metal cation as a cofactor.

It catalyses the reaction (1R,6R)-6-hydroxy-2-succinyl-cyclohexa-2,4-diene-1-carboxylate = 2-succinylbenzoate + H2O. The protein operates within quinol/quinone metabolism; 1,4-dihydroxy-2-naphthoate biosynthesis; 1,4-dihydroxy-2-naphthoate from chorismate: step 4/7. It participates in quinol/quinone metabolism; menaquinone biosynthesis. Converts 2-succinyl-6-hydroxy-2,4-cyclohexadiene-1-carboxylate (SHCHC) to 2-succinylbenzoate (OSB). The polypeptide is o-succinylbenzoate synthase (Haemophilus influenzae (strain ATCC 51907 / DSM 11121 / KW20 / Rd)).